Reading from the N-terminus, the 358-residue chain is Phospho-N-acetylmuramoyl-pentapeptide-transferase (358 aa).

The next 10 helical transmembrane spans lie at 27–47 (IYAMITALLVCFVLGPWVIRV), 73–93 (TMGGVMILAAIVIPTLLWADL), 97–117 (YIWTVLFITIGYGLIGFVDDY), 134–154 (MFWQVLLAGAVGTFLFLKPGF), 170–190 (LWFWYIPFVTLVIVGASNAVN), 197–217 (GLAIGPVAINAATYMLFSYVA), 233–253 (GAGELAVLCGAMVGAGLGFLW), 261–281 (VFMGDVGSLSLGGTLGAIAVI), 286–306 (ILLVIVGGIFVIEALSVIFQV), and 335–355 (KIIVRFWIITIILALVAISTL).

The protein belongs to the glycosyltransferase 4 family. MraY subfamily. The cofactor is Mg(2+).

It localises to the cell inner membrane. The catalysed reaction is UDP-N-acetyl-alpha-D-muramoyl-L-alanyl-gamma-D-glutamyl-meso-2,6-diaminopimeloyl-D-alanyl-D-alanine + di-trans,octa-cis-undecaprenyl phosphate = di-trans,octa-cis-undecaprenyl diphospho-N-acetyl-alpha-D-muramoyl-L-alanyl-D-glutamyl-meso-2,6-diaminopimeloyl-D-alanyl-D-alanine + UMP. It participates in cell wall biogenesis; peptidoglycan biosynthesis. In terms of biological role, catalyzes the initial step of the lipid cycle reactions in the biosynthesis of the cell wall peptidoglycan: transfers peptidoglycan precursor phospho-MurNAc-pentapeptide from UDP-MurNAc-pentapeptide onto the lipid carrier undecaprenyl phosphate, yielding undecaprenyl-pyrophosphoryl-MurNAc-pentapeptide, known as lipid I. This is Phospho-N-acetylmuramoyl-pentapeptide-transferase from Pelobacter propionicus (strain DSM 2379 / NBRC 103807 / OttBd1).